Consider the following 72-residue polypeptide: Large ribosomal subunit protein uL29 (72 aa).

It belongs to the universal ribosomal protein uL29 family.

The chain is Large ribosomal subunit protein uL29 from Rhodopirellula baltica (strain DSM 10527 / NCIMB 13988 / SH1).